We begin with the raw amino-acid sequence, 221 residues long: ATP phosphoribosyltransferase (221 aa).

The protein belongs to the ATP phosphoribosyltransferase family. Short subfamily. In terms of assembly, heteromultimer composed of HisG and HisZ subunits.

The protein resides in the cytoplasm. It carries out the reaction 1-(5-phospho-beta-D-ribosyl)-ATP + diphosphate = 5-phospho-alpha-D-ribose 1-diphosphate + ATP. Its pathway is amino-acid biosynthesis; L-histidine biosynthesis; L-histidine from 5-phospho-alpha-D-ribose 1-diphosphate: step 1/9. Functionally, catalyzes the condensation of ATP and 5-phosphoribose 1-diphosphate to form N'-(5'-phosphoribosyl)-ATP (PR-ATP). Has a crucial role in the pathway because the rate of histidine biosynthesis seems to be controlled primarily by regulation of HisG enzymatic activity. This chain is ATP phosphoribosyltransferase, found in Carboxydothermus hydrogenoformans (strain ATCC BAA-161 / DSM 6008 / Z-2901).